Reading from the N-terminus, the 352-residue chain is Photosystem II D2 protein (352 aa).

Residues 40–60 traverse the membrane as a helical segment; sequence CAYLALGGWLTGTTFVTSWYT. His117 is a chlorophyll a binding site. A helical transmembrane segment spans residues 124-140; sequence GFMLRQFEIARLVGVRP. Residues Gln129 and Asn142 each coordinate pheophytin a. The helical transmembrane segment at 152-165 threads the bilayer; that stretch reads VFVSVFLIYPLGQS. His197 is a binding site for chlorophyll a. The helical transmembrane segment at 207–227 threads the bilayer; sequence GALLCAIHGATVENTLYKDGE. 2 residues coordinate a plastoquinone: His214 and Phe261. His214 provides a ligand contact to Fe cation. Residue His268 coordinates Fe cation. The chain crosses the membrane as a helical span at residues 278 to 294; that stretch reads GLWMSSIGVVGLALNLR.

It belongs to the reaction center PufL/M/PsbA/D family. In terms of assembly, PSII is composed of 1 copy each of membrane proteins PsbA, PsbB, PsbC, PsbD, PsbE, PsbF, PsbH, PsbI, PsbJ, PsbK, PsbL, PsbM, PsbT, PsbX, PsbY, PsbZ, Psb30/Ycf12, peripheral proteins PsbO, CyanoQ (PsbQ), PsbU, PsbV and a large number of cofactors. It forms dimeric complexes. The D1/D2 heterodimer binds P680, chlorophylls that are the primary electron donor of PSII, and subsequent electron acceptors. It shares a non-heme iron and each subunit binds pheophytin, quinone, additional chlorophylls, carotenoids and lipids. There is also a Cl(-1) ion associated with D1 and D2, which is required for oxygen evolution. The PSII complex binds additional chlorophylls, carotenoids and specific lipids. is required as a cofactor.

It is found in the cellular thylakoid membrane. It catalyses the reaction 2 a plastoquinone + 4 hnu + 2 H2O = 2 a plastoquinol + O2. Its function is as follows. Photosystem II (PSII) is a light-driven water:plastoquinone oxidoreductase that uses light energy to abstract electrons from H(2)O, generating O(2) and a proton gradient subsequently used for ATP formation. It consists of a core antenna complex that captures photons, and an electron transfer chain that converts photonic excitation into a charge separation. The D1/D2 (PsbA/PsbD) reaction center heterodimer binds P680, the primary electron donor of PSII as well as several subsequent electron acceptors. D2 is needed for assembly of a stable PSII complex. In Synechococcus sp. (strain JA-3-3Ab) (Cyanobacteria bacterium Yellowstone A-Prime), this protein is Photosystem II D2 protein.